A 234-amino-acid chain; its full sequence is Sugar fermentation stimulation protein homolog (234 aa).

The protein belongs to the SfsA family.

The polypeptide is Sugar fermentation stimulation protein homolog (Pectobacterium atrosepticum (strain SCRI 1043 / ATCC BAA-672) (Erwinia carotovora subsp. atroseptica)).